Reading from the N-terminus, the 172-residue chain is Protein GrpE (172 aa).

Residues 1–11 show a composition bias toward low complexity; sequence MSEENNSQNSN. Positions 1-22 are disordered; the sequence is MSEENNSQNSNPPNPENGEIAS.

It belongs to the GrpE family. Homodimer.

The protein localises to the cytoplasm. Functionally, participates actively in the response to hyperosmotic and heat shock by preventing the aggregation of stress-denatured proteins, in association with DnaK and GrpE. It is the nucleotide exchange factor for DnaK and may function as a thermosensor. Unfolded proteins bind initially to DnaJ; upon interaction with the DnaJ-bound protein, DnaK hydrolyzes its bound ATP, resulting in the formation of a stable complex. GrpE releases ADP from DnaK; ATP binding to DnaK triggers the release of the substrate protein, thus completing the reaction cycle. Several rounds of ATP-dependent interactions between DnaJ, DnaK and GrpE are required for fully efficient folding. The sequence is that of Protein GrpE from Bdellovibrio bacteriovorus (strain ATCC 15356 / DSM 50701 / NCIMB 9529 / HD100).